Reading from the N-terminus, the 555-residue chain is mRNA cleavage and polyadenylation factor CLP1 (555 aa).

ATP contacts are provided by residues E30, K69, and 156–161 (YLGKTS). The segment at 431-451 (DDFEHITNEDENGGDGNDGDG) is disordered.

The protein belongs to the Clp1 family. Clp1 subfamily. Component of a pre-mRNA cleavage factor complex. Interacts directly with PCF11.

Its subcellular location is the nucleus. Required for endonucleolytic cleavage during polyadenylation-dependent pre-mRNA 3'-end formation. In Lodderomyces elongisporus (strain ATCC 11503 / CBS 2605 / JCM 1781 / NBRC 1676 / NRRL YB-4239) (Yeast), this protein is mRNA cleavage and polyadenylation factor CLP1.